The sequence spans 277 residues: NAD kinase (277 aa).

The active-site Proton acceptor is the Asp67. NAD(+)-binding positions include 67–68 (DG), Arg72, 137–138 (NE), Lys148, Arg165, Asp167, 178–183 (TGYAMS), Leu202, and Gln236.

It belongs to the NAD kinase family. A divalent metal cation serves as cofactor.

Its subcellular location is the cytoplasm. The enzyme catalyses NAD(+) + ATP = ADP + NADP(+) + H(+). Involved in the regulation of the intracellular balance of NAD and NADP, and is a key enzyme in the biosynthesis of NADP. Catalyzes specifically the phosphorylation on 2'-hydroxyl of the adenosine moiety of NAD to yield NADP. The sequence is that of NAD kinase from Pyrococcus furiosus (strain ATCC 43587 / DSM 3638 / JCM 8422 / Vc1).